The following is a 130-amino-acid chain: HTH-type transcriptional regulator KmtR (130 aa).

Residues Leu-10–Gly-104 enclose the HTH arsR-type domain. Positions Val-44–Met-67 form a DNA-binding region, H-T-H motif. Residues His-110–Gly-130 are disordered.

Its activity is regulated as follows. Binding to DNA is inhibited by nickel and cobalt ions. Represses expression of Rv2025c and its own expression. Acts by binding to the promoter regions. The sequence is that of HTH-type transcriptional regulator KmtR (kmtR) from Mycobacterium tuberculosis (strain ATCC 25618 / H37Rv).